The chain runs to 154 residues: MKAVLQRVAEARVVVAGETVGRIGQGLLVLVCAERGDSEAQADKLLAKILKLRIFSDDAGKMNRSVQDLDGQGACGGLLVVSQFTLAADASGGNRPSFTGAAPPDVGRRLYDYFVAQARKLHPQVETGQFAADMQVHLVNDGPVTIPLHIAPDA.

Positions 142–143 (GP) match the Gly-cisPro motif, important for rejection of L-amino acids motif.

The protein belongs to the DTD family. Homodimer.

Its subcellular location is the cytoplasm. It catalyses the reaction glycyl-tRNA(Ala) + H2O = tRNA(Ala) + glycine + H(+). The catalysed reaction is a D-aminoacyl-tRNA + H2O = a tRNA + a D-alpha-amino acid + H(+). In terms of biological role, an aminoacyl-tRNA editing enzyme that deacylates mischarged D-aminoacyl-tRNAs. Also deacylates mischarged glycyl-tRNA(Ala), protecting cells against glycine mischarging by AlaRS. Acts via tRNA-based rather than protein-based catalysis; rejects L-amino acids rather than detecting D-amino acids in the active site. By recycling D-aminoacyl-tRNA to D-amino acids and free tRNA molecules, this enzyme counteracts the toxicity associated with the formation of D-aminoacyl-tRNA entities in vivo and helps enforce protein L-homochirality. The polypeptide is D-aminoacyl-tRNA deacylase (Polaromonas naphthalenivorans (strain CJ2)).